Consider the following 302-residue polypeptide: Acetylglutamate kinase (302 aa).

Residues 68-69 (GG), R90, and N195 contribute to the substrate site.

It belongs to the acetylglutamate kinase family. ArgB subfamily.

It is found in the cytoplasm. It catalyses the reaction N-acetyl-L-glutamate + ATP = N-acetyl-L-glutamyl 5-phosphate + ADP. Its pathway is amino-acid biosynthesis; L-arginine biosynthesis; N(2)-acetyl-L-ornithine from L-glutamate: step 2/4. Its function is as follows. Catalyzes the ATP-dependent phosphorylation of N-acetyl-L-glutamate. The chain is Acetylglutamate kinase from Marinomonas sp. (strain MWYL1).